A 375-amino-acid chain; its full sequence is Chaperone protein DnaJ (375 aa).

The J domain occupies 6–71 (DYYEVLGVPK…EKRRQYDQFG (66 aa)). Residues 138 to 220 (GTTKKIDVTL…CYGTGYISSK (83 aa)) form a CR-type zinc finger. The Zn(2+) site is built by Cys151, Cys154, Cys168, Cys171, Cys194, Cys197, Cys208, and Cys211. CXXCXGXG motif repeat units follow at residues 151–158 (CSSCHGTG), 168–175 (CSKCGGRG), 194–201 (CPDCHGTG), and 208–215 (CPDCYGTG).

The protein belongs to the DnaJ family. As to quaternary structure, homodimer. It depends on Zn(2+) as a cofactor.

The protein localises to the cytoplasm. Functionally, participates actively in the response to hyperosmotic and heat shock by preventing the aggregation of stress-denatured proteins and by disaggregating proteins, also in an autonomous, DnaK-independent fashion. Unfolded proteins bind initially to DnaJ; upon interaction with the DnaJ-bound protein, DnaK hydrolyzes its bound ATP, resulting in the formation of a stable complex. GrpE releases ADP from DnaK; ATP binding to DnaK triggers the release of the substrate protein, thus completing the reaction cycle. Several rounds of ATP-dependent interactions between DnaJ, DnaK and GrpE are required for fully efficient folding. Also involved, together with DnaK and GrpE, in the DNA replication of plasmids through activation of initiation proteins. This is Chaperone protein DnaJ from Lachnospira eligens (strain ATCC 27750 / DSM 3376 / VPI C15-48 / C15-B4) (Eubacterium eligens).